The primary structure comprises 391 residues: Protein CapJ (391 aa).

Its pathway is capsule biogenesis; capsule polysaccharide biosynthesis. In terms of biological role, required for the biosynthesis of type 1 capsular polysaccharide. The protein is Protein CapJ (capJ) of Staphylococcus aureus.